Consider the following 149-residue polypeptide: uncharacterized protein (149 aa).

This is an uncharacterized protein from Homo sapiens (Human).